A 232-amino-acid chain; its full sequence is YlmG homolog protein 1-1, chloroplastic (232 aa).

A chloroplast-targeting transit peptide spans 1–16 (MAAITALTLRSPVYLP). Transmembrane regions (helical) follow at residues 147 to 167 (LTVV…VLMV) and 201 to 221 (IIPP…AVLG).

It belongs to the YggT family.

It is found in the plastid. It localises to the chloroplast thylakoid membrane. Functionally, required for the proper distribution of nucleoids in chloroplasts. The nucleoid partitioning by YLMG1-1 may be related to chloroplast division processes. This is YlmG homolog protein 1-1, chloroplastic from Arabidopsis thaliana (Mouse-ear cress).